Consider the following 492-residue polypeptide: Solute carrier family 2, facilitated glucose transporter member 1 (492 aa).

N-acetylmethionine is present on Met-1. Over 1–11 the chain is Cytoplasmic; sequence MEPSSKKLTGR. The chain crosses the membrane as a helical span at residues 12–33; it reads LMLAVGGAVLGSLQFGYNTGVI. The Extracellular segment spans residues 34–66; it reads NAPQKVIEEFYNQTWVHRYGESILPTTLTTLWS. Asn-45 is a glycosylation site (N-linked (GlcNAc...) asparagine). A helical membrane pass occupies residues 67-87; that stretch reads LSVAIFSVGGMIGSFSVGLFV. Residues 88-90 are Cytoplasmic-facing; the sequence is NRF. A helical membrane pass occupies residues 91–112; that stretch reads GRRNSMLMMNLLAFVSAVLMGF. Residues 113-120 lie on the Extracellular side of the membrane; it reads SKLGKSFE. The helical transmembrane segment at 121 to 144 threads the bilayer; the sequence is MLILGRFIIGVYCGLTTGFVPMYV. Thr-137 is a binding site for cytochalasin B. Over 145–155 the chain is Cytoplasmic; sequence GEVSPTALRGA. The chain crosses the membrane as a helical span at residues 156–176; that stretch reads LGTLHQLGIVVGILIAQVFGL. The Extracellular portion of the chain corresponds to 177 to 185; the sequence is DSIMGNKDL. Residues 186–206 form a helical membrane-spanning segment; it reads WPLLLSIIFIPALLQCIVLPF. At 207 to 271 the chain is on the cytoplasmic side; that stretch reads CPESPRFLLI…LFRSPAYRQP (65 aa). Ser-226 bears the Phosphoserine; by PKC/PRKCB mark. A helical membrane pass occupies residues 272 to 293; it reads ILIAVVLQLSQQLSGINAVFYY. Cytochalasin B is bound at residue Gln-282. D-glucose is bound by residues 282–283 and Asn-288; that span reads QQ. The Extracellular segment spans residues 294–306; it reads STSIFEKAGVQQP. A helical transmembrane segment spans residues 307 to 328; sequence VYATIGSGIVNTAFTVVSLFVV. Asn-317 serves as a coordination point for D-glucose. Topologically, residues 329-334 are cytoplasmic; sequence ERAGRR. Residues 335-355 form a helical membrane-spanning segment; it reads TLHLIGLAGMAGCAILMTIAL. The Extracellular portion of the chain corresponds to 356–365; it reads ALLEQLPWMS. The chain crosses the membrane as a helical span at residues 366–388; the sequence is YLSIVAIFGFVAFFEVGPGPIPW. A D-glucose-binding site is contributed by Glu-380. Residue Trp-388 coordinates cytochalasin B. Over 389-401 the chain is Cytoplasmic; that stretch reads FIVAELFSQGPRP. The helical transmembrane segment at 402–422 threads the bilayer; the sequence is AAIAVAGFSNWTSNFIVGMCF. Asn-411 lines the cytochalasin B pocket. At 423 to 429 the chain is on the extracellular side; the sequence is QYVEQLC. The helical transmembrane segment at 430 to 450 threads the bilayer; it reads GPYVFIIFTVLLVLFFIFTYF. The Cytoplasmic segment spans residues 451–492; sequence KVPETKGRTFDEIASGFRQGGASQSDKTPEELFHPLGADSQV. Ser-465 is subject to Phosphoserine. Residues 468-492 are disordered; sequence RQGGASQSDKTPEELFHPLGADSQV. Phosphothreonine is present on Thr-478. At Ser-490 the chain carries Phosphoserine.

The protein belongs to the major facilitator superfamily. Sugar transporter (TC 2.A.1.1) family. Glucose transporter subfamily. As to quaternary structure, interacts with GIPC (via PDZ domain). Found in a complex with ADD2, DMTN and SLC2A1. Interacts (via C-terminus cytoplasmic region) with DMTN isoform 2. Interacts with SNX27; the interaction is required when endocytosed to prevent degradation in lysosomes and promote recycling to the plasma membrane. Interacts with STOM. Interacts with SGTA (via Gln-rich region). Interacts with isoform 1 of BSG. Phosphorylation at Ser-226 by PKC promotes glucose uptake by increasing cell membrane localization. In terms of tissue distribution, detected in erythrocytes (at protein level). Expressed at variable levels in many human tissues.

Its subcellular location is the cell membrane. The protein localises to the melanosome. It localises to the photoreceptor inner segment. It catalyses the reaction D-glucose(out) = D-glucose(in). The protein operates within carbohydrate degradation. Its activity is regulated as follows. The uptake of glucose is inhibited by cytochalasin B and Phe-amide core-scaffold inhibitors GLUT-i1 and GLUT-i2. These inhibitors bind in the central cavity of the inward-open state and overlap the glucose-binding site. Glucose uptake is increased in response to phorbol ester 12-O-tetradecanoylphorbol-13-acetate (TPA) treatment: TPA-induced glucose uptake requires phosphorylation at Ser-226. Interacts with SMIM43; the interaction may promote SLC2A1-mediated glucose transport to meet the energy needs of mesendoderm differentiation. Facilitative glucose transporter, which is responsible for constitutive or basal glucose uptake. Has a very broad substrate specificity; can transport a wide range of aldoses including both pentoses and hexoses. Most important energy carrier of the brain: present at the blood-brain barrier and assures the energy-independent, facilitative transport of glucose into the brain. In association with BSG and NXNL1, promotes retinal cone survival by increasing glucose uptake into photoreceptors. Required for mesendoderm differentiation. The chain is Solute carrier family 2, facilitated glucose transporter member 1 from Homo sapiens (Human).